A 196-amino-acid chain; its full sequence is Holliday junction branch migration complex subunit RuvA (196 aa).

A domain I region spans residues 1-63 (MINKICGKIV…EDEIRLFGFL (63 aa)). The interval 64–135 (NVSEREVFEK…KLRGKLVKVN (72 aa)) is domain II. A flexible linker region spans residues 135–138 (NEAS). The segment at 139 to 196 (SGVLKFKELEQSIVNMGFDRKLVAAAIKEIMLIDEFLMLRQVDQEQFLFREILRKLSG) is domain III.

The protein belongs to the RuvA family. In terms of assembly, homotetramer. Forms an RuvA(8)-RuvB(12)-Holliday junction (HJ) complex. HJ DNA is sandwiched between 2 RuvA tetramers; dsDNA enters through RuvA and exits via RuvB. An RuvB hexamer assembles on each DNA strand where it exits the tetramer. Each RuvB hexamer is contacted by two RuvA subunits (via domain III) on 2 adjacent RuvB subunits; this complex drives branch migration. In the full resolvosome a probable DNA-RuvA(4)-RuvB(12)-RuvC(2) complex forms which resolves the HJ.

The protein resides in the cytoplasm. The RuvA-RuvB-RuvC complex processes Holliday junction (HJ) DNA during genetic recombination and DNA repair, while the RuvA-RuvB complex plays an important role in the rescue of blocked DNA replication forks via replication fork reversal (RFR). RuvA specifically binds to HJ cruciform DNA, conferring on it an open structure. The RuvB hexamer acts as an ATP-dependent pump, pulling dsDNA into and through the RuvAB complex. HJ branch migration allows RuvC to scan DNA until it finds its consensus sequence, where it cleaves and resolves the cruciform DNA. This chain is Holliday junction branch migration complex subunit RuvA, found in Borrelia turicatae (strain 91E135).